Here is a 166-residue protein sequence, read N- to C-terminus: Putative 4-hydroxy-4-methyl-2-oxoglutarate aldolase (166 aa).

Residues 74-77 (GDQI) and R96 contribute to the substrate site. Position 97 (D97) interacts with a divalent metal cation.

Belongs to the class II aldolase/RraA-like family. Homotrimer. It depends on a divalent metal cation as a cofactor.

The catalysed reaction is 4-hydroxy-4-methyl-2-oxoglutarate = 2 pyruvate. It carries out the reaction oxaloacetate + H(+) = pyruvate + CO2. Its function is as follows. Catalyzes the aldol cleavage of 4-hydroxy-4-methyl-2-oxoglutarate (HMG) into 2 molecules of pyruvate. Also contains a secondary oxaloacetate (OAA) decarboxylase activity due to the common pyruvate enolate transition state formed following C-C bond cleavage in the retro-aldol and decarboxylation reactions. This Xanthomonas oryzae pv. oryzae (strain MAFF 311018) protein is Putative 4-hydroxy-4-methyl-2-oxoglutarate aldolase.